The chain runs to 176 residues: Small capsomere-interacting protein (176 aa).

Disordered regions lie at residues 75–109 and 148–176; these read DKRQRASVAGAGAHAHLGGSSATPVQQAQAAASAG and ASAAAAVDTGSGGGGQPHDTAPRGARKKQ. The segment covering 80 to 109 has biased composition (low complexity); it reads ASVAGAGAHAHLGGSSATPVQQAQAAASAG.

Belongs to the herpesviridae small capsomere-interacting protein family. In terms of assembly, interacts with the major capsid protein/MCP.

The protein localises to the virion. Its subcellular location is the host nucleus. Its function is as follows. Participates in the assembly of the infectious particles by decorating the outer surface of the capsid shell and thus forming a layer between the capsid and the tegument. Complexes composed of the major capsid protein and small capsomere-interacting protein/SCP assemble together in the host cytoplasm and are translocated to the nucleus, where they accumulate and participate in capsid assembly. The chain is Small capsomere-interacting protein from Epstein-Barr virus (strain B95-8) (HHV-4).